A 342-amino-acid polypeptide reads, in one-letter code: Platelet-activating factor receptor (342 aa).

The Extracellular portion of the chain corresponds to 1–16 (MEPNNSFRVDSEFRYT). N4 carries an N-linked (GlcNAc...) asparagine glycan. Residues 17 to 38 (LFPIFYSIVFVLGVIANSYVLW) traverse the membrane as a helical segment. Over 39–54 (VFARLYPSKKFNEIKI) the chain is Cytoplasmic. A helical transmembrane segment spans residues 55-74 (FMVNLTMADLLFLVTLPLWI). Residues 75-91 (VYYYNQGDWILPKFLCN) are Extracellular-facing. C90 and C173 form a disulfide bridge. A helical membrane pass occupies residues 92–113 (LAGCFFFINTYCSVAFLAVITY). The Cytoplasmic portion of the chain corresponds to 114–133 (NRFQAVTRPIKTAQATTRKR). A helical membrane pass occupies residues 134-155 (GILLSLIIWVSIVGAASYFFVL). Residues 156–184 (DSTNREPNKTGSANITRCFEHYEKGSIPV) lie on the Extracellular side of the membrane. N163 and N169 each carry an N-linked (GlcNAc...) asparagine glycan. The chain crosses the membrane as a helical span at residues 185–205 (LTIHIFLVFSFFLVFLIILFC). At 206–233 (NLVIIRTLLTQQVQIQRNAEVKRRALWM) the chain is on the cytoplasmic side. Residues 234–254 (VCTVLAVFIICFVPHHLVQLP) form a helical membrane-spanning segment. Residues 255 to 276 (WTLAELGFQDTDFHQAINDAHQ) are Extracellular-facing. A helical membrane pass occupies residues 277–296 (VTLCLLSTNCVLDPIIYCFL). Over 297–342 (TKKFRKHLTEKLYSMRESRKCSRATSETGTEVVMQLKDVPVKSLKY) the chain is Cytoplasmic.

This sequence belongs to the G-protein coupled receptor 1 family. As to quaternary structure, interacts with ARRB1. In terms of tissue distribution, found in oviductal epithelial and stroma cells. Levels in the oviduct are raised at days 2-4 of both pregnancy and of the estrus cycle. In the endometrium, localization is predominantly to the apical borders of glandular and luminal epithelial cells. Expressed at lower levels in endometrial stromal cells. Levels in the endometrium are increased at day 20 of pregnancy (at protein level).

The protein localises to the cell membrane. Its function is as follows. Receptor for platelet activating factor, a chemotactic phospholipid mediator that possesses potent inflammatory, smooth-muscle contractile and hypotensive activity. Seems to mediate its action via a G protein that activates a phosphatidylinositol-calcium second messenger system. May be involved in the morphological and physical modifications of the oviduct and uterus during the estrus cycle and early pregnancy. This is Platelet-activating factor receptor from Bos taurus (Bovine).